The sequence spans 43 residues: Protein PsbN (43 aa).

A helical membrane pass occupies residues 7–27; the sequence is LIVAIAAVTICITAFAIYTAF.

The protein belongs to the PsbN family.

The protein resides in the cellular thylakoid membrane. Functionally, may play a role in photosystem I and II biogenesis. The polypeptide is Protein PsbN (Synechococcus sp. (strain JA-2-3B'a(2-13)) (Cyanobacteria bacterium Yellowstone B-Prime)).